The primary structure comprises 122 residues: Large ribosomal subunit protein uL14 (122 aa).

Belongs to the universal ribosomal protein uL14 family. As to quaternary structure, part of the 50S ribosomal subunit. Forms a cluster with proteins L3 and L19. In the 70S ribosome, L14 and L19 interact and together make contacts with the 16S rRNA in bridges B5 and B8.

Functionally, binds to 23S rRNA. Forms part of two intersubunit bridges in the 70S ribosome. The protein is Large ribosomal subunit protein uL14 of Elusimicrobium minutum (strain Pei191).